The chain runs to 603 residues: Prostaglandin G/H synthase 2 (603 aa).

The N-terminal stretch at 1-17 (MLLPCALLAALLAAGHA) is a signal peptide. The EGF-like domain occupies 18-55 (ANPCCSLPCQNRGVCMTTGFDRYECDCTRTGYYGENCT). Cystine bridges form between cysteine 21–cysteine 32, cysteine 22–cysteine 145, cysteine 26–cysteine 42, and cysteine 44–cysteine 54. N-linked (GlcNAc...) asparagine glycans are attached at residues asparagine 53 and asparagine 90. A substrate-binding site is contributed by arginine 106. A glycan (N-linked (GlcNAc...) asparagine) is linked at asparagine 130. The active-site Proton acceptor is histidine 193. Tyrosine 341 is a substrate binding site. Tyrosine 371 (for cyclooxygenase activity) is an active-site residue. Histidine 374 lines the heme b pocket. Cysteine 555 and cysteine 561 form a disulfide bridge.

It belongs to the prostaglandin G/H synthase family. In terms of assembly, homodimer. It depends on heme b as a cofactor.

It is found in the microsome membrane. The protein resides in the endoplasmic reticulum membrane. The catalysed reaction is (5Z,8Z,11Z,14Z)-eicosatetraenoate + AH2 + 2 O2 = prostaglandin H2 + A + H2O. It carries out the reaction (9Z,12Z)-octadecadienoate + AH2 + O2 = (9R)-hydroxy-(10E,12Z)-octadecadienoate + A + H2O. It catalyses the reaction (9Z,12Z)-octadecadienoate + AH2 + O2 = (9S)-hydroxy-(10E,12Z)-octadecadienoate + A + H2O. The enzyme catalyses (9Z,12Z)-octadecadienoate + AH2 + O2 = (13S)-hydroxy-(9Z,11E)-octadecadienoate + A + H2O. The catalysed reaction is (9Z,12Z)-octadecadienoate + AH2 + O2 = (13R)-hydroxy-(9Z,11E)-octadecadienoate + A + H2O. It functions in the pathway lipid metabolism; prostaglandin biosynthesis. Its function is as follows. Dual cyclooxygenase and peroxidase in the biosynthesis pathway of prostanoids, a class of C20 oxylipins mainly derived from arachidonate ((5Z,8Z,11Z,14Z)-eicosatetraenoate, AA, C20:4(n-6)), with a particular role in the inflammatory response. The cyclooxygenase activity oxygenates AA to the hydroperoxy endoperoxide prostaglandin G2 (PGG2), and the peroxidase activity reduces PGG2 to the hydroxy endoperoxide prostaglandin H2 (PGH2), the precursor of all 2-series prostaglandins and thromboxanes. This complex transformation is initiated by abstraction of hydrogen at carbon 13 (with S-stereochemistry), followed by insertion of molecular O2 to form the endoperoxide bridge between carbon 9 and 11 that defines prostaglandins. The insertion of a second molecule of O2 (bis-oxygenase activity) yields a hydroperoxy group in PGG2 that is then reduced to PGH2 by two electrons. Similarly catalyzes successive cyclooxygenation and peroxidation of dihomo-gamma-linoleate (DGLA, C20:3(n-6)) and eicosapentaenoate (EPA, C20:5(n-3)) to corresponding PGH1 and PGH3, the precursors of 1- and 3-series prostaglandins. In an alternative pathway of prostanoid biosynthesis, converts 2-arachidonoyl lysophopholipids to prostanoid lysophopholipids, which are then hydrolyzed by intracellular phospholipases to release free prostanoids. Metabolizes 2-arachidonoyl glycerol yielding the glyceryl ester of PGH2, a process that can contribute to pain response. Generates lipid mediators from n-3 and n-6 polyunsaturated fatty acids (PUFAs) via a lipoxygenase-type mechanism. Oxygenates PUFAs to hydroperoxy compounds and then reduces them to corresponding alcohols. Plays a role in the generation of resolution phase interaction products (resolvins) during both sterile and infectious inflammation. Metabolizes docosahexaenoate (DHA, C22:6(n-3)) to 17R-HDHA, a precursor of the D-series resolvins (RvDs). As a component of the biosynthetic pathway of E-series resolvins (RvEs), converts eicosapentaenoate (EPA, C20:5(n-3)) primarily to 18S-HEPE that is further metabolized by ALOX5 and LTA4H to generate 18S-RvE1 and 18S-RvE2. In vascular endothelial cells, converts docosapentaenoate (DPA, C22:5(n-3)) to 13R-HDPA, a precursor for 13-series resolvins (RvTs) shown to activate macrophage phagocytosis during bacterial infection. In activated leukocytes, contributes to oxygenation of hydroxyeicosatetraenoates (HETE) to diHETES (5,15-diHETE and 5,11-diHETE). Can also use linoleate (LA, (9Z,12Z)-octadecadienoate, C18:2(n-6)) as substrate and produce hydroxyoctadecadienoates (HODEs) in a regio- and stereospecific manner, being (9R)-HODE ((9R)-hydroxy-(10E,12Z)-octadecadienoate) and (13S)-HODE ((13S)-hydroxy-(9Z,11E)-octadecadienoate) its major products. During neuroinflammation, plays a role in neuronal secretion of specialized preresolving mediators (SPMs) 15R-lipoxin A4 that regulates phagocytic microglia. The sequence is that of Prostaglandin G/H synthase 2 (PTGS2) from Gallus gallus (Chicken).